We begin with the raw amino-acid sequence, 414 residues long: Enterobactin exporter EntS (414 aa).

At 1–21 the chain is on the cytoplasmic side; the sequence is MNRQSWLLNLSLLKTHPAFRA. A helical transmembrane segment spans residues 22 to 42; the sequence is VFLARFISIVSLGLLGVAVPV. Topologically, residues 43 to 55 are periplasmic; it reads QIQMMTHSTWQVG. Residues 56-76 traverse the membrane as a helical segment; that stretch reads LSVTLTGGAMFIGLMVGGVLA. Residues 77–83 are Cytoplasmic-facing; sequence DRYERKK. Residues 84-104 traverse the membrane as a helical segment; it reads VILLARGTCGIGFIGLCVNAL. Over 105-109 the chain is Periplasmic; that stretch reads LPEPS. Residues 110–130 traverse the membrane as a helical segment; the sequence is LLAIYLLGLWDGFFASLGVTA. The Cytoplasmic portion of the chain corresponds to 131-156; sequence LLAATPALVGRENLMQAGAITMLTVR. The chain crosses the membrane as a helical span at residues 157–177; it reads LGSVISPMLGGILLASGGVAW. Residue Asn178 is a topological domain, periplasmic. A helical transmembrane segment spans residues 179-199; that stretch reads YGLAAAGTFITLLPLLTLPRL. The Cytoplasmic segment spans residues 200–218; sequence PVPPQPRENPFIALLAAFR. The helical transmembrane segment at 219-239 threads the bilayer; the sequence is FLLASPLIGGIALLGGLVTMA. Residues 240 to 256 lie on the Periplasmic side of the membrane; it reads SAVRVLYPALAMSWQMS. Residues 257-277 form a helical membrane-spanning segment; the sequence is AAQIGLLYAAIPLGAAIGALT. Residues 278 to 287 are Cytoplasmic-facing; that stretch reads SGQLAHSVRP. A helical membrane pass occupies residues 288 to 307; sequence GLIMLVSTVGSFLAVGLFAI. Topologically, residues 308 to 313 are periplasmic; that stretch reads MPIWIA. Residues 314–336 form a helical membrane-spanning segment; it reads GVICLALFGWLSAISSLLQYTLL. Residues 337–356 lie on the Cytoplasmic side of the membrane; the sequence is QTQTPENMLGRMNGLWTAQN. Residues 357 to 377 traverse the membrane as a helical segment; sequence VTGDAIGAALLGGLGAMMTPV. Ala378 is a topological domain (periplasmic). Residues 379–399 traverse the membrane as a helical segment; it reads SASVSGFGLVIIGLLLLLVLG. The Cytoplasmic segment spans residues 400-414; sequence ELRRFRQTPPVSDAG.

This sequence belongs to the major facilitator superfamily. EntS (TC 2.A.1.38) family.

The protein localises to the cell inner membrane. Its function is as follows. Component of an export pathway for enterobactin. This Salmonella typhi protein is Enterobactin exporter EntS.